The following is a 256-amino-acid chain: Spheroidene monooxygenase (256 aa).

The segment covering 1-23 has biased composition (low complexity); it reads MTNELSNAAGASQQGPAASSFSA. The disordered stretch occupies residues 1-26; the sequence is MTNELSNAAGASQQGPAASSFSADTP.

It belongs to the CrtA family. Heme serves as cofactor.

It carries out the reaction spheroidene + 4 reduced [2Fe-2S]-[ferredoxin] + 2 O2 + 4 H(+) = spheroiden-2-one + 4 oxidized [2Fe-2S]-[ferredoxin] + 3 H2O. The enzyme catalyses spirilloxanthin + 4 reduced [2Fe-2S]-[ferredoxin] + 2 O2 + 4 H(+) = 2-oxospirilloxanthin + 4 oxidized [2Fe-2S]-[ferredoxin] + 3 H2O. It catalyses the reaction 2-oxospirilloxanthin + 4 reduced [2Fe-2S]-[ferredoxin] + 2 O2 + 4 H(+) = 2,2'-dioxospirilloxanthin + 4 oxidized [2Fe-2S]-[ferredoxin] + 3 H2O. The catalysed reaction is spheroidene + 2 reduced [2Fe-2S]-[ferredoxin] + O2 + 2 H(+) = 2-hydroxyspheroidene + 2 oxidized [2Fe-2S]-[ferredoxin] + H2O. It carries out the reaction 2-hydroxyspheroidene + 2 reduced [2Fe-2S]-[ferredoxin] + O2 + 2 H(+) = 2,2-dihydroxyspheroidene + 2 oxidized [2Fe-2S]-[ferredoxin] + H2O. The enzyme catalyses 2,2-dihydroxyspheroidene = spheroiden-2-one + H2O. It catalyses the reaction spirilloxanthin + 2 reduced [2Fe-2S]-[ferredoxin] + O2 + 2 H(+) = 2-hydroxyspirilloxanthin + 2 oxidized [2Fe-2S]-[ferredoxin] + H2O. The catalysed reaction is 2-hydroxyspirilloxanthin + 2 reduced [2Fe-2S]-[ferredoxin] + O2 + 2 H(+) = 2,2-dihydroxyspirilloxanthin + 2 oxidized [2Fe-2S]-[ferredoxin] + H2O. It carries out the reaction 2,2-dihydroxyspirilloxanthin = 2-oxospirilloxanthin + H2O. The enzyme catalyses 2-oxospirilloxanthin + 2 reduced [2Fe-2S]-[ferredoxin] + O2 + 2 H(+) = 2'-hydroxy-2-oxospirilloxanthin + 2 oxidized [2Fe-2S]-[ferredoxin] + H2O. It catalyses the reaction 2'-hydroxy-2-oxospirilloxanthin + 2 reduced [2Fe-2S]-[ferredoxin] + O2 + 2 H(+) = 2',2'-dihydroxy-2-oxospirilloxanthin + 2 oxidized [2Fe-2S]-[ferredoxin] + H2O. The catalysed reaction is 2',2'-dihydroxy-2-oxospirilloxanthin = 2,2'-dioxospirilloxanthin + H2O. Its pathway is carotenoid biosynthesis; spheroidene biosynthesis. It functions in the pathway carotenoid biosynthesis; spirilloxanthin biosynthesis. In terms of biological role, involved in the biosynthesis of the carotenoids spheroidene and spirilloxanthin. Catalyzes the introduction of one keto group at the C-2 position of spheroidene and two keto groups at the C-2 and C-2' positions of spirilloxanthin. This is Spheroidene monooxygenase from Rubrivivax gelatinosus (Rhodocyclus gelatinosus).